We begin with the raw amino-acid sequence, 217 residues long: 3,4-dihydroxy-2-butanone 4-phosphate synthase (217 aa).

Residues 37–38 (RE), D42, 150–154 (RGGHT), and E174 each bind D-ribulose 5-phosphate. E38 serves as a coordination point for Mg(2+). H153 contributes to the Mg(2+) binding site.

The protein belongs to the DHBP synthase family. Homodimer. Mg(2+) is required as a cofactor. Requires Mn(2+) as cofactor.

It carries out the reaction D-ribulose 5-phosphate = (2S)-2-hydroxy-3-oxobutyl phosphate + formate + H(+). The protein operates within cofactor biosynthesis; riboflavin biosynthesis; 2-hydroxy-3-oxobutyl phosphate from D-ribulose 5-phosphate: step 1/1. Its function is as follows. Catalyzes the conversion of D-ribulose 5-phosphate to formate and 3,4-dihydroxy-2-butanone 4-phosphate. The sequence is that of 3,4-dihydroxy-2-butanone 4-phosphate synthase from Proteus mirabilis (strain HI4320).